Reading from the N-terminus, the 304-residue chain is Putative metal ion transporter ZIPCO (304 aa).

8 helical membrane-spanning segments follow: residues 1–21 (MWLKLILAIVILIECIVVIYL), 46–66 (VASGAILALAFIHMLPEVIGL), 74–94 (IYCCFGLILISVTFLNITDIL), 158–178 (FFIVLSLFIHSFVEGLLIGSL), 183–203 (PIIIVGLSMIAHKWAECLMIY), 218–238 (IYAWSFILSLPLGILVAVLSF), 243–263 (FVEIIFSSIACGFFLYLSFNM), and 275–295 (FYISFSYFFGVCGMSTLMIVF).

It is found in the cell membrane. Putative transporter for the divalent zinc and iron cations. Required for the development of liver-stage parasites. The protein is Putative metal ion transporter ZIPCO of Plasmodium berghei (strain Anka).